The sequence spans 165 residues: Phosphopantetheine adenylyltransferase (165 aa).

Residue Thr10 participates in substrate binding. Residues 10–11 (TF) and His18 contribute to the ATP site. Residues Lys42, Leu74, and Arg88 each coordinate substrate. Residues 89–91 (GLR), Glu99, and 124–130 (NAFISSS) contribute to the ATP site.

It belongs to the bacterial CoaD family. As to quaternary structure, homohexamer. Mg(2+) serves as cofactor.

Its subcellular location is the cytoplasm. The catalysed reaction is (R)-4'-phosphopantetheine + ATP + H(+) = 3'-dephospho-CoA + diphosphate. The protein operates within cofactor biosynthesis; coenzyme A biosynthesis; CoA from (R)-pantothenate: step 4/5. In terms of biological role, reversibly transfers an adenylyl group from ATP to 4'-phosphopantetheine, yielding dephospho-CoA (dPCoA) and pyrophosphate. The protein is Phosphopantetheine adenylyltransferase of Helicobacter hepaticus (strain ATCC 51449 / 3B1).